The chain runs to 223 residues: Ribonuclease T (223 aa).

The region spanning 20–194 (VVIDVETAGF…YDTEQTALLF (175 aa)) is the Exonuclease domain. Residues Asp23, Glu25, His181, and Asp186 each coordinate Mg(2+). His181 serves as the catalytic Proton donor/acceptor.

The protein belongs to the RNase T family. Homodimer. Mg(2+) serves as cofactor.

In terms of biological role, trims short 3' overhangs of a variety of RNA species, leaving a one or two nucleotide 3' overhang. Responsible for the end-turnover of tRNA: specifically removes the terminal AMP residue from uncharged tRNA (tRNA-C-C-A). Also appears to be involved in tRNA biosynthesis. The polypeptide is Ribonuclease T (Cronobacter sakazakii (strain ATCC BAA-894) (Enterobacter sakazakii)).